The following is a 304-amino-acid chain: Quinolinate synthase (304 aa).

The iminosuccinate site is built by His-23 and Ser-40. A [4Fe-4S] cluster-binding site is contributed by Cys-86. Residues 112–114 (YVN) and Ser-129 each bind iminosuccinate. [4Fe-4S] cluster is bound at residue Cys-173. Residues 199–201 (HPE) and Thr-216 contribute to the iminosuccinate site. Cys-260 contacts [4Fe-4S] cluster.

Belongs to the quinolinate synthase family. Type 2 subfamily. Requires [4Fe-4S] cluster as cofactor.

Its subcellular location is the cytoplasm. It catalyses the reaction iminosuccinate + dihydroxyacetone phosphate = quinolinate + phosphate + 2 H2O + H(+). It functions in the pathway cofactor biosynthesis; NAD(+) biosynthesis; quinolinate from iminoaspartate: step 1/1. Catalyzes the condensation of iminoaspartate with dihydroxyacetone phosphate to form quinolinate. The sequence is that of Quinolinate synthase from Methanothermobacter thermautotrophicus (strain ATCC 29096 / DSM 1053 / JCM 10044 / NBRC 100330 / Delta H) (Methanobacterium thermoautotrophicum).